The following is a 258-amino-acid chain: Imidazole glycerol phosphate synthase subunit HisF (258 aa).

Active-site residues include aspartate 11 and aspartate 130.

The protein belongs to the HisA/HisF family. In terms of assembly, heterodimer of HisH and HisF.

The protein resides in the cytoplasm. The enzyme catalyses 5-[(5-phospho-1-deoxy-D-ribulos-1-ylimino)methylamino]-1-(5-phospho-beta-D-ribosyl)imidazole-4-carboxamide + L-glutamine = D-erythro-1-(imidazol-4-yl)glycerol 3-phosphate + 5-amino-1-(5-phospho-beta-D-ribosyl)imidazole-4-carboxamide + L-glutamate + H(+). It functions in the pathway amino-acid biosynthesis; L-histidine biosynthesis; L-histidine from 5-phospho-alpha-D-ribose 1-diphosphate: step 5/9. IGPS catalyzes the conversion of PRFAR and glutamine to IGP, AICAR and glutamate. The HisF subunit catalyzes the cyclization activity that produces IGP and AICAR from PRFAR using the ammonia provided by the HisH subunit. This chain is Imidazole glycerol phosphate synthase subunit HisF, found in Salmonella arizonae (strain ATCC BAA-731 / CDC346-86 / RSK2980).